The chain runs to 119 residues: V-type proton ATPase subunit F (119 aa).

It belongs to the V-ATPase F subunit family. As to quaternary structure, V-ATPase is a heteromultimeric enzyme made up of two complexes: the ATP-hydrolytic V1 complex and the proton translocation V0 complex. The V1 complex consists of three catalytic AB heterodimers that form a heterohexamer, three peripheral stalks each consisting of EG heterodimers, one central rotor including subunits D and F, and the regulatory subunits C and H. The proton translocation complex V0 consists of the proton transport subunit a, a ring of proteolipid subunits c9c'', rotary subunit d, subunits e and f, and the accessory subunits ATP6AP1/Ac45 and ATP6AP2/PRR.

Its subcellular location is the cytoplasmic vesicle. The protein resides in the secretory vesicle. It is found in the synaptic vesicle membrane. The protein localises to the clathrin-coated vesicle membrane. Functionally, subunit of the V1 complex of vacuolar(H+)-ATPase (V-ATPase), a multisubunit enzyme composed of a peripheral complex (V1) that hydrolyzes ATP and a membrane integral complex (V0) that translocates protons. V-ATPase is responsible for acidifying and maintaining the pH of intracellular compartments and in some cell types, is targeted to the plasma membrane, where it is responsible for acidifying the extracellular environment. This is V-type proton ATPase subunit F (Atp6v1f) from Mus musculus (Mouse).